The primary structure comprises 148 residues: Lysozyme C (148 aa).

An N-terminal signal peptide occupies residues 1–18 (MKAVIILGLVLLSVTVQG). The 130-residue stretch at 19-148 (KIFERCELAR…VSQYVQGCGV (130 aa)) folds into the C-type lysozyme domain. 4 disulfide bridges follow: Cys24–Cys146, Cys48–Cys134, Cys83–Cys99, and Cys95–Cys113. Active-site residues include Glu53 and Asp71.

It belongs to the glycosyl hydrolase 22 family. Monomer.

The protein localises to the secreted. The enzyme catalyses Hydrolysis of (1-&gt;4)-beta-linkages between N-acetylmuramic acid and N-acetyl-D-glucosamine residues in a peptidoglycan and between N-acetyl-D-glucosamine residues in chitodextrins.. Functionally, lysozymes have primarily a bacteriolytic function; those in tissues and body fluids are associated with the monocyte-macrophage system and enhance the activity of immunoagents. In Miopithecus talapoin (Angolan talapoin), this protein is Lysozyme C (LYZ).